A 225-amino-acid polypeptide reads, in one-letter code: Phosphoglycolate phosphatase (225 aa).

The active-site Nucleophile is aspartate 11. Aspartate 11, aspartate 13, and aspartate 174 together coordinate Mg(2+).

Belongs to the HAD-like hydrolase superfamily. CbbY/CbbZ/Gph/YieH family. Mg(2+) is required as a cofactor.

It catalyses the reaction 2-phosphoglycolate + H2O = glycolate + phosphate. It functions in the pathway organic acid metabolism; glycolate biosynthesis; glycolate from 2-phosphoglycolate: step 1/1. Functionally, specifically catalyzes the dephosphorylation of 2-phosphoglycolate. Is involved in the dissimilation of the intracellular 2-phosphoglycolate formed during the DNA repair of 3'-phosphoglycolate ends, a major class of DNA lesions induced by oxidative stress. In Nitrosococcus oceani (strain ATCC 19707 / BCRC 17464 / JCM 30415 / NCIMB 11848 / C-107), this protein is Phosphoglycolate phosphatase.